The sequence spans 102 residues: Urease subunit beta (102 aa).

This sequence belongs to the urease beta subunit family. Heterotrimer of UreA (gamma), UreB (beta) and UreC (alpha) subunits. Three heterotrimers associate to form the active enzyme.

The protein localises to the cytoplasm. It catalyses the reaction urea + 2 H2O + H(+) = hydrogencarbonate + 2 NH4(+). It functions in the pathway nitrogen metabolism; urea degradation; CO(2) and NH(3) from urea (urease route): step 1/1. This Alteromonas mediterranea (strain DSM 17117 / CIP 110805 / LMG 28347 / Deep ecotype) protein is Urease subunit beta.